We begin with the raw amino-acid sequence, 1906 residues long: Retinoic acid-induced protein 1 (1906 aa).

Disordered regions lie at residues 1–261 (MQSF…APGQ), 273–299 (RLSYDQQQQQQQQQQQQQQALQSRHHA), 335–370 (YQTFSPSSSHSPARSVGRSPSYSSTPSPLMPNLENF), 469–520 (VSRT…YLSG), 538–571 (SPARVNSNSKAKPESVSTCSVTSPDDMSTKSDDS), and 656–712 (SAWP…GTKP). The span at 13 to 24 (KQQNYQQTSQET) shows a compositional bias: polar residues. The span at 66–75 (PSGTAAAVAA) shows a compositional bias: low complexity. Positions 124–134 (PQPPPPQPQPL) are enriched in pro residues. The span at 213-226 (SQSFPTSSTYSSSV) shows a compositional bias: low complexity. Positions 252 to 261 (TASSSLAPGQ) are enriched in polar residues. 2 stretches are compositionally biased toward low complexity: residues 278 to 291 (QQQQQQQQQQQQQQ) and 339 to 353 (SPSSSHSPARSVGRS). 2 positions are modified to phosphoserine: Ser-339 and Ser-345. Thr-472 is modified (phosphothreonine). Positions 541–563 (RVNSNSKAKPESVSTCSVTSPDD) are enriched in polar residues. A phosphoserine mark is found at Ser-568 and Ser-683. At Thr-696 the chain carries Phosphothreonine. Ser-805 is modified (phosphoserine). A Glycyl lysine isopeptide (Lys-Gly) (interchain with G-Cter in SUMO2) cross-link involves residue Lys-811. Lys-819 is covalently cross-linked (Glycyl lysine isopeptide (Lys-Gly) (interchain with G-Cter in SUMO1)). Residues Ser-880 and Ser-892 each carry the phosphoserine modification. A Glycyl lysine isopeptide (Lys-Gly) (interchain with G-Cter in SUMO1); alternate cross-link involves residue Lys-901. A Glycyl lysine isopeptide (Lys-Gly) (interchain with G-Cter in SUMO2); alternate cross-link involves residue Lys-901. The span at 937–947 (KVQSWFESSLS) shows a compositional bias: polar residues. Disordered regions lie at residues 937–1299 (KVQS…ETPD), 1344–1570 (FACK…PLDP), 1613–1637 (VVNSPGDAPKPHRKPSSSASSSSSS), 1746–1775 (AAAATAGKPPRPDGPADPAKQGPLRTSARG), and 1794–1819 (EEAAPADKGRKHECSKEAPAEPGGEA). Positions 950-962 (KPGEEGPDGERAP) are enriched in basic and acidic residues. The segment covering 996-1005 (KSLRSRRVHR) has biased composition (basic residues). Position 1064 is a phosphoserine (Ser-1064). Position 1068 is a phosphothreonine (Thr-1068). Low complexity predominate over residues 1101–1119 (PSPKAASSPSNPAALPVAS). Residue Ser-1122 is modified to Phosphoserine. Short sequence motifs (nuclear localization signal) lie at residues 1160-1177 (RRRPSEGRLPNCRATKKL) and 1223-1240 (KRKSAFMAPVPTKKRNLV). A compositionally biased stretch (low complexity) spans 1242 to 1252 (RSRSSSSSNAS). Residues Ser-1352, Ser-1358, and Ser-1374 each carry the phosphoserine modification. Lys-1425 participates in a covalent cross-link: Glycyl lysine isopeptide (Lys-Gly) (interchain with G-Cter in SUMO2). Ser-1431 is modified (phosphoserine). Residues 1444–1453 (PKKRSRKGRA) show a composition bias toward basic residues. Polar residues-rich tracts occupy residues 1482–1491 (SGTQGASEDN) and 1517–1534 (QPQTRAQKQPGHTNYSSY). A compositionally biased stretch (basic residues) spans 1535–1545 (SKRKRLTRGRA). Residues 1628 to 1637 (SSSASSSSSS) show a composition bias toward low complexity. Residues 1780–1835 (LQSCYCCDGREDGGEEAAPADKGRKHECSKEAPAEPGGEAQEHWVHEACAVWTGGV) form a C2HC pre-PHD-type zinc finger. The span at 1798 to 1812 (PADKGRKHECSKEAP) shows a compositional bias: basic and acidic residues. Residues 1855–1903 (MMCSSCQEAGATIGCCHKGCLHTYHYPCASDAGCIFIEENFSLKCPKHK) form a PHD-type zinc finger.

Expressed in all tissues examined with higher expression in the heart and brain. No expression was seen in the corpus callosum of the brain.

The protein resides in the cytoplasm. The protein localises to the nucleus. Functionally, transcriptional regulator of the circadian clock components: CLOCK, BMAL1, BMAL2, PER1/3, CRY1/2, NR1D1/2 and RORA/C. Positively regulates the transcriptional activity of CLOCK a core component of the circadian clock. Regulates transcription through chromatin remodeling by interacting with other proteins in chromatin as well as proteins in the basic transcriptional machinery. May be important for embryonic and postnatal development. May be involved in neuronal differentiation. The sequence is that of Retinoic acid-induced protein 1 (RAI1) from Homo sapiens (Human).